Reading from the N-terminus, the 236-residue chain is Alpha-acetolactate decarboxylase (236 aa).

This sequence belongs to the alpha-acetolactate decarboxylase family.

The catalysed reaction is (2S)-2-acetolactate + H(+) = (R)-acetoin + CO2. It functions in the pathway polyol metabolism; (R,R)-butane-2,3-diol biosynthesis; (R,R)-butane-2,3-diol from pyruvate: step 2/3. Functionally, converts acetolactate into acetoin. The polypeptide is Alpha-acetolactate decarboxylase (aldB) (Lactococcus lactis subsp. lactis (strain IL1403) (Streptococcus lactis)).